The chain runs to 1012 residues: Vacuolar membrane protease (1012 aa).

Residues 1-60 (MRRSTDPRNLLVRRGPLLVDGESAISELDPGFFPTGDAPKMSSTTRRRFNLIAFTPGPVT) are Cytoplasmic-facing. Residues 61–81 (VISSLVYLALLIPLLLVHTIV) form a helical membrane-spanning segment. The Vacuolar portion of the chain corresponds to 82–432 (PSAPKSNPKG…SFAVFRLHTL (351 aa)). Residue N159 is glycosylated (N-linked (GlcNAc...) asparagine). Residues H215 and D227 each contribute to the Zn(2+) site. E261 (proton acceptor) is an active-site residue. E262, E287, and H360 together coordinate Zn(2+). The helical transmembrane segment at 433–453 (FAISVTLLVVCPIVLFVIGII) threads the bilayer. The Cytoplasmic portion of the chain corresponds to 454 to 487 (LSKMDKMYLFSIHETIPETKEKVSVRGLRGLFRY). Residues 488–508 (PIILVVSSGILIGLSYLLAKV) traverse the membrane as a helical segment. The Vacuolar segment spans residues 509–518 (NPFIVHSSSY). The helical transmembrane segment at 519–539 (AVWSMMLSSWIFMTWFLSCIA) threads the bilayer. The Cytoplasmic portion of the chain corresponds to 540-550 (DFFRPSALHRA). A helical transmembrane segment spans residues 551–571 (YTFTWQLLVMWVLLVISTVYV). Over 572-575 (NQHD) the chain is Vacuolar. A helical transmembrane segment spans residues 576–596 (IAAGYFIVFYFAGTFLATLIS). Residues 597 to 710 (YLELFALPNK…WSASLPTWTW (114 aa)) are Cytoplasmic-facing. Residues 614-629 (SQYPSRLGSNRSSRIL) are compositionally biased toward polar residues. A disordered region spans residues 614 to 660 (SQYPSRLGSNRSSRILSPSADELPTGGDNNGEIYDGEEEPTESSSLL). Residues 711 to 731 (VLQFLFVGPVVIMFIGQLGLF) traverse the membrane as a helical segment. Residues 732-743 (LTSAMNQVGADG) lie on the Vacuolar side of the membrane. The chain crosses the membrane as a helical span at residues 744 to 764 (VGLLVVYIAIAVFSVLLLIPL). Residues 765–777 (SPFIHRFTYHVPT) lie on the Cytoplasmic side of the membrane. Residues 778-798 (FLLLVFIATLIYNLAAFPFSA) form a helical membrane-spanning segment. Residues 799–1012 (ENRLKIFFVQ…DGLVEVSRGF (214 aa)) are Vacuolar-facing. N842 and N878 each carry an N-linked (GlcNAc...) asparagine glycan.

It belongs to the peptidase M28 family. It depends on Zn(2+) as a cofactor.

It localises to the vacuole membrane. In terms of biological role, may be involved in vacuolar sorting and osmoregulation. In Coccidioides posadasii (strain RMSCC 757 / Silveira) (Valley fever fungus), this protein is Vacuolar membrane protease.